The sequence spans 434 residues: Adenylosuccinate synthetase (434 aa).

GTP-binding positions include 25-31 and 53-55; these read GDEGKGK and GHT. Aspartate 26 serves as the catalytic Proton acceptor. Residues aspartate 26 and glycine 53 each contribute to the Mg(2+) site. IMP is bound by residues 26–29, 51–54, threonine 142, arginine 156, asparagine 233, threonine 248, and arginine 312; these read DEGK and NAGH. Histidine 54 acts as the Proton donor in catalysis. 308–314 lines the substrate pocket; that stretch reads VTTGRKR. GTP-binding positions include arginine 314, 340–342, and 422–424; these read KLD and GVG.

This sequence belongs to the adenylosuccinate synthetase family. Homodimer. It depends on Mg(2+) as a cofactor.

It is found in the cytoplasm. The enzyme catalyses IMP + L-aspartate + GTP = N(6)-(1,2-dicarboxyethyl)-AMP + GDP + phosphate + 2 H(+). The protein operates within purine metabolism; AMP biosynthesis via de novo pathway; AMP from IMP: step 1/2. Competitively Inhibited by GMP. Allosterically inhibited by AMP. Its function is as follows. Plays an important role in the de novo pathway and in the salvage pathway of purine nucleotide biosynthesis. Catalyzes the first committed step in the biosynthesis of AMP from IMP. The polypeptide is Adenylosuccinate synthetase (ade2) (Schizosaccharomyces pombe (strain 972 / ATCC 24843) (Fission yeast)).